Reading from the N-terminus, the 74-residue chain is Translational regulator CsrA (74 aa).

It belongs to the CsrA/RsmA family. In terms of assembly, homodimer; the beta-strands of each monomer intercalate to form a hydrophobic core, while the alpha-helices form wings that extend away from the core.

The protein localises to the cytoplasm. Its function is as follows. A translational regulator that binds mRNA to regulate translation initiation and/or mRNA stability. Usually binds in the 5'-UTR at or near the Shine-Dalgarno sequence preventing ribosome-binding, thus repressing translation. Its main target seems to be the major flagellin gene, while its function is anatagonized by FliW. This chain is Translational regulator CsrA, found in Bacillus velezensis (strain DSM 23117 / BGSC 10A6 / LMG 26770 / FZB42) (Bacillus amyloliquefaciens subsp. plantarum).